The primary structure comprises 795 residues: TBC1 domain family member 5 (795 aa).

Over residues 1 to 13 (MYHSLSETRHPLQ) the composition is skewed to basic and acidic residues. Residues 1 to 49 (MYHSLSETRHPLQPEEQEVGIDPLSSYSNKSGGDSNKNGRRTSSTLDSE) are disordered. Residues 25–49 (SSYSNKSGGDSNKNGRRTSSTLDSE) are compositionally biased toward polar residues. Residue Thr-42 is modified to Phosphothreonine. Phosphoserine occurs at positions 43 and 44. Residues 56-64 (RKEWEELFV) form a required for interaction with retromer; involved in interaction with ATG8 family proteins region. An LIR 1 motif is present at residues 57 to 62 (KEWEEL). The region spanning 81-359 (LRSSRFRSIC…VVWDALFADG (279 aa)) is the Rab-GAP TBC domain. A Phosphoserine modification is found at Ser-460. The tract at residues 475–564 (PGSAGGPVPG…PPSSATKKDS (90 aa)) is disordered. Positions 484–496 (GGNSSSSSSVVIP) are enriched in low complexity. Residues Ser-522, Ser-539, Ser-541, Ser-544, Ser-554, Ser-570, Ser-584, and Ser-730 each carry the phosphoserine modification. Polar residues predominate over residues 523–542 (MPVQLNKGLSSKNISSSPSV). A compositionally biased stretch (polar residues) spans 554 to 564 (SPPSSATKKDS). Positions 674-795 (HYCSSGQGQG…GFTIVSPLDI (122 aa)) are disordered. Over residues 727 to 748 (ARGSFSGQAQPLRTLRSTSGKS) the composition is skewed to polar residues. Over residues 765–776 (PASASSSNPSSS) the composition is skewed to low complexity. The LIR 2 signature appears at 785 to 789 (SGFTI). Positions 786–791 (GFTIVS) are required for interaction with ATG8 family proteins. Ser-791 bears the Phosphoserine mark.

Interacts with MAP1LC3A, MAP1LC3B, MAP1LC3C, GABARAP, GABARAPL1, GABARAPL2. Interacts with VPS29 and VPS35; indicative for an association with retromer CSC subcomplex. MAP1LC3A and VPS29 compete for binding to TBC1D5. Interacts with AP2M1; indicative for an association with the AP2 complex. Interacts with ULK1 and ATG13 (phosphorylated); indicative for an association with the activated ULK1-ATG13-FIP200 complex. Interacts with ATG9A; the interactions seems to be restricted to the AP2-clathrin-associated fraction of ATG9A.

The protein resides in the endosome membrane. It localises to the cytoplasmic vesicle. The protein localises to the autophagosome. In terms of biological role, may act as a GTPase-activating protein (GAP) for Rab family protein(s). May act as a GAP for RAB7A. Can displace RAB7A and retromer CSC subcomplex from the endosomal membrane to the cytosol; at least retromer displacement seems to require its catalytic activity. Required for retrograde transport of cargo proteins from endosomes to the trans-Golgi network (TGN); the function seems to require its catalytic activity. Involved in regulation of autophagy. May act as a molecular switch between endosomal and autophagosomal transport and is involved in reprogramming vesicle trafficking upon autophagy induction. Involved in the trafficking of ATG9A upon activation of autophagy. May regulate the recruitment of ATG9A-AP2-containing vesicles to autophagic membranes. The sequence is that of TBC1 domain family member 5 (TBC1D5) from Homo sapiens (Human).